The primary structure comprises 454 residues: Bifunctional protein GlmU (454 aa).

A pyrophosphorylase region spans residues 1 to 225 (MNIVILAAGM…VWETLGVNSK (225 aa)). UDP-N-acetyl-alpha-D-glucosamine-binding positions include 6 to 9 (LAAG), Lys20, Gln71, 76 to 77 (GT), 98 to 100 (YGD), Gly135, Glu150, Asn165, and Asn223. Residue Asp100 participates in Mg(2+) binding. Mg(2+) is bound at residue Asn223. Positions 226–246 (LQLAEVERIHQGNQARRLLEA) are linker. The interval 247 to 454 (GVTLLDPARI…WQRPVKQPKQ (208 aa)) is N-acetyltransferase. Residues Arg329 and Lys347 each contribute to the UDP-N-acetyl-alpha-D-glucosamine site. His359 serves as the catalytic Proton acceptor. Tyr362 and Asn373 together coordinate UDP-N-acetyl-alpha-D-glucosamine. Acetyl-CoA contacts are provided by residues Ala376, 382–383 (NY), Ser401, Ala419, and Arg436.

The protein in the N-terminal section; belongs to the N-acetylglucosamine-1-phosphate uridyltransferase family. In the C-terminal section; belongs to the transferase hexapeptide repeat family. In terms of assembly, homotrimer. Mg(2+) serves as cofactor.

Its subcellular location is the cytoplasm. The enzyme catalyses alpha-D-glucosamine 1-phosphate + acetyl-CoA = N-acetyl-alpha-D-glucosamine 1-phosphate + CoA + H(+). The catalysed reaction is N-acetyl-alpha-D-glucosamine 1-phosphate + UTP + H(+) = UDP-N-acetyl-alpha-D-glucosamine + diphosphate. It participates in nucleotide-sugar biosynthesis; UDP-N-acetyl-alpha-D-glucosamine biosynthesis; N-acetyl-alpha-D-glucosamine 1-phosphate from alpha-D-glucosamine 6-phosphate (route II): step 2/2. Its pathway is nucleotide-sugar biosynthesis; UDP-N-acetyl-alpha-D-glucosamine biosynthesis; UDP-N-acetyl-alpha-D-glucosamine from N-acetyl-alpha-D-glucosamine 1-phosphate: step 1/1. The protein operates within bacterial outer membrane biogenesis; LPS lipid A biosynthesis. In terms of biological role, catalyzes the last two sequential reactions in the de novo biosynthetic pathway for UDP-N-acetylglucosamine (UDP-GlcNAc). The C-terminal domain catalyzes the transfer of acetyl group from acetyl coenzyme A to glucosamine-1-phosphate (GlcN-1-P) to produce N-acetylglucosamine-1-phosphate (GlcNAc-1-P), which is converted into UDP-GlcNAc by the transfer of uridine 5-monophosphate (from uridine 5-triphosphate), a reaction catalyzed by the N-terminal domain. In Cupriavidus taiwanensis (strain DSM 17343 / BCRC 17206 / CCUG 44338 / CIP 107171 / LMG 19424 / R1) (Ralstonia taiwanensis (strain LMG 19424)), this protein is Bifunctional protein GlmU.